The following is a 335-amino-acid chain: Glyceraldehyde-3-phosphate dehydrogenase (335 aa).

NAD(+) contacts are provided by residues 10 to 11, aspartate 33, lysine 77, and threonine 119; that span reads RI. Residues 150-152, threonine 181, 210-211, and arginine 233 each bind D-glyceraldehyde 3-phosphate; these read SCT and TG. Cysteine 151 serves as the catalytic Nucleophile. Asparagine 315 serves as a coordination point for NAD(+).

It belongs to the glyceraldehyde-3-phosphate dehydrogenase family. Homotetramer.

It localises to the cytoplasm. It carries out the reaction D-glyceraldehyde 3-phosphate + phosphate + NAD(+) = (2R)-3-phospho-glyceroyl phosphate + NADH + H(+). Its pathway is carbohydrate degradation; glycolysis; pyruvate from D-glyceraldehyde 3-phosphate: step 1/5. Catalyzes the oxidative phosphorylation of glyceraldehyde 3-phosphate (G3P) to 1,3-bisphosphoglycerate (BPG) using the cofactor NAD. The first reaction step involves the formation of a hemiacetal intermediate between G3P and a cysteine residue, and this hemiacetal intermediate is then oxidized to a thioester, with concomitant reduction of NAD to NADH. The reduced NADH is then exchanged with the second NAD, and the thioester is attacked by a nucleophilic inorganic phosphate to produce BPG. The sequence is that of Glyceraldehyde-3-phosphate dehydrogenase (gap) from Chlamydia muridarum (strain MoPn / Nigg).